We begin with the raw amino-acid sequence, 347 residues long: tRNA N6-adenosine threonylcarbamoyltransferase (347 aa).

2 residues coordinate Fe cation: His113 and His117. Residues 136–140 (LVSGG), Asp170, Gly183, Asp187, and Asn282 each bind substrate. A Fe cation-binding site is contributed by Asp310.

It belongs to the KAE1 / TsaD family. Requires Fe(2+) as cofactor.

It localises to the cytoplasm. The catalysed reaction is L-threonylcarbamoyladenylate + adenosine(37) in tRNA = N(6)-L-threonylcarbamoyladenosine(37) in tRNA + AMP + H(+). Its function is as follows. Required for the formation of a threonylcarbamoyl group on adenosine at position 37 (t(6)A37) in tRNAs that read codons beginning with adenine. Is involved in the transfer of the threonylcarbamoyl moiety of threonylcarbamoyl-AMP (TC-AMP) to the N6 group of A37, together with TsaE and TsaB. TsaD likely plays a direct catalytic role in this reaction. This is tRNA N6-adenosine threonylcarbamoyltransferase from Cutibacterium acnes (strain DSM 16379 / KPA171202) (Propionibacterium acnes).